The following is a 148-amino-acid chain: Copper transport protein ctr6 (148 aa).

The Extracellular portion of the chain corresponds to 1–33; that stretch reads MNHGGNSTMRHCSMKMTFNTDYDNLCIVFKSWH. Residues 34-54 form a helical membrane-spanning segment; the sequence is IGNLSQFLLSLLAIAILGYLF. The Cytoplasmic segment spans residues 55-108; it reads ERLRSFTSLKETEFQRGYAGQQSEGLLTHHSKSLKSGRPFRLCALYAVQLVFSY. A helical membrane pass occupies residues 109–129; it reads FLMLVAMTYNAYVILAIAIGA. Topologically, residues 130–148 are extracellular; it reads AFGYRRSHCDTVQTVGLCH.

This sequence belongs to the copper transporter (Ctr) (TC 1.A.56) family. SLC31A subfamily. Homotrimer.

It localises to the vacuole membrane. In terms of biological role, mobilizes stored copper from the vacuole to the cytoplasm under conditions of copper limitation. This chain is Copper transport protein ctr6 (ctr6), found in Schizosaccharomyces pombe (strain 972 / ATCC 24843) (Fission yeast).